Consider the following 310-residue polypeptide: 300 kDa antigen AG231 (310 aa).

Residues 1–23 are 4 X 6 AA tandem repeats of V-V-T-G-S-C; it reads VTGSCVVTGSCVVTDSCVVTGSC. The tract at residues 29-106 is 13 X 6 AA tandem repeats of V-V-[TI]-[QE]-E-[PH]; it reads VTTQESVTTQ…TQEPVTVEEH (78 aa). Low complexity predominate over residues 53–101; sequence VTIEEPVTTQEPVTIEEPVTTQEPVTTQEPVTTQEPVTTQEPVTTQEPV. The disordered stretch occupies residues 53 to 310; sequence VTIEEPVTTQ…FGRGNKNDKK (258 aa). Basic and acidic residues-rich tracts occupy residues 103–114 and 147–160; these read VEEHIDEKKGSE and NKND…KKPS. Residues 107–152 form a 45 AA repeat 1 repeat; that stretch reads IDEKKGSEGDNISLSSLSEETEEKSHTKKKKSSWLKFGRGNKNDKK. The span at 176-190 shows a compositional bias: polar residues; sequence TDSQISVNAQDSVTI. The 13 X 6 AA approximate tandem repeats stretch occupies residues 188–265; sequence VTIQEPTATQ…TQEPSTTQEH (78 aa). Positions 191–235 are enriched in low complexity; the sequence is QEPTATQEPPTTQELTATQEPTTTQETVTEQEPTTTQETVTAQEP. The segment covering 236 to 263 has biased composition (polar residues); it reads ITTQEPVTAQEPVTTQELIATQEPSTTQ. Basic and acidic residues predominate over residues 264–273; the sequence is EHADEKKASE. The 45 AA repeat 2 repeat unit spans residues 266–310; that stretch reads ADEKKASEGDNISLSRLSEETEEKSHTKKKSSWLKFGRGNKNDKK.

In Plasmodium falciparum (isolate FC27 / Papua New Guinea), this protein is 300 kDa antigen AG231 (FIRA).